Consider the following 423-residue polypeptide: Histone acetyltransferase type B subunit 2 (423 aa).

WD repeat units lie at residues 138-174 (PHIE…TLEE), 175-224 (SKAQ…KPKS), 228-268 (SHDD…EPVK), 271-311 (PTAS…SPLH), and 315-355 (GHQD…AEQS). An interaction with the histone H4 N-terminus region spans residues 357–361 (DDADD). Residues 372–412 (GHRSPVNEFSFNPQIPWLLASTEEDNVIQAWKVSMKLVNAS) form a WD 6 repeat.

This sequence belongs to the WD repeat RBAP46/RBAP48/MSI1 family. In terms of assembly, component of the HAT-B complex composed of at least HAT1 and HAT2. The HAT-B complex binds to histone H4 tail.

Its subcellular location is the cytoplasm. It is found in the nucleus. Functionally, regulatory subunit of the histone acetylase B (HAT-B) complex. The complex acetylates 'Lys-12' of histone H4 which is required for telomeric silencing. This Eremothecium gossypii (strain ATCC 10895 / CBS 109.51 / FGSC 9923 / NRRL Y-1056) (Yeast) protein is Histone acetyltransferase type B subunit 2 (HAT2).